The sequence spans 424 residues: Serine--tRNA ligase (424 aa).

L-serine is bound at residue 230 to 232 (TAE). Residue 261 to 263 (RSE) coordinates ATP. Glutamate 284 lines the L-serine pocket. 348 to 351 (EISS) is an ATP binding site. L-serine is bound at residue serine 384.

The protein belongs to the class-II aminoacyl-tRNA synthetase family. Type-1 seryl-tRNA synthetase subfamily. Homodimer. The tRNA molecule binds across the dimer.

It localises to the cytoplasm. The catalysed reaction is tRNA(Ser) + L-serine + ATP = L-seryl-tRNA(Ser) + AMP + diphosphate + H(+). It carries out the reaction tRNA(Sec) + L-serine + ATP = L-seryl-tRNA(Sec) + AMP + diphosphate + H(+). It functions in the pathway aminoacyl-tRNA biosynthesis; selenocysteinyl-tRNA(Sec) biosynthesis; L-seryl-tRNA(Sec) from L-serine and tRNA(Sec): step 1/1. Catalyzes the attachment of serine to tRNA(Ser). Is also able to aminoacylate tRNA(Sec) with serine, to form the misacylated tRNA L-seryl-tRNA(Sec), which will be further converted into selenocysteinyl-tRNA(Sec). The protein is Serine--tRNA ligase of Streptococcus pneumoniae serotype 2 (strain D39 / NCTC 7466).